Reading from the N-terminus, the 479-residue chain is Aspartyl/glutamyl-tRNA(Asn/Gln) amidotransferase subunit B (479 aa).

The protein belongs to the GatB/GatE family. GatB subfamily. In terms of assembly, heterotrimer of A, B and C subunits.

It carries out the reaction L-glutamyl-tRNA(Gln) + L-glutamine + ATP + H2O = L-glutaminyl-tRNA(Gln) + L-glutamate + ADP + phosphate + H(+). The catalysed reaction is L-aspartyl-tRNA(Asn) + L-glutamine + ATP + H2O = L-asparaginyl-tRNA(Asn) + L-glutamate + ADP + phosphate + 2 H(+). Its function is as follows. Allows the formation of correctly charged Asn-tRNA(Asn) or Gln-tRNA(Gln) through the transamidation of misacylated Asp-tRNA(Asn) or Glu-tRNA(Gln) in organisms which lack either or both of asparaginyl-tRNA or glutaminyl-tRNA synthetases. The reaction takes place in the presence of glutamine and ATP through an activated phospho-Asp-tRNA(Asn) or phospho-Glu-tRNA(Gln). The protein is Aspartyl/glutamyl-tRNA(Asn/Gln) amidotransferase subunit B of Mycoplasma capricolum subsp. capricolum (strain California kid / ATCC 27343 / NCTC 10154).